The chain runs to 1113 residues: Carbamoyl phosphate synthase arginine-specific large chain (1113 aa).

Residues 23–420 form a carboxyphosphate synthetic domain region; it reads QLIKGIDSVL…AFQKAFRQVD (398 aa). 12 residues coordinate ATP: Arg150, Arg190, Gly196, Gly197, Lys227, Leu229, Glu234, Gly260, Ile261, His262, Gln303, and Glu317. The region spanning 154 to 346 is the ATP-grasp 1 domain; the sequence is ARALKEINMP…LAYTAAKIAL (193 aa). The Mg(2+) site is built by Gln303, Glu317, and Asn319. 3 residues coordinate Mn(2+): Gln303, Glu317, and Asn319. An oligomerization domain region spans residues 421–568; that stretch reads PSLLGFQGSD…YVTYNAVKDD (148 aa). Residues 569 to 955 form a carbamoyl phosphate synthetic domain region; sequence VTFGDNGIMV…SYWVALQGLM (387 aa). Positions 693-888 constitute an ATP-grasp 2 domain; it reads STILDTLGLD…FVEIAVKAFL (196 aa). The ATP site is built by Arg729, Lys768, Ile770, Glu775, Gly800, Val801, His802, Ser803, Gln843, and Glu859. Mg(2+) contacts are provided by Gln843, Glu859, and Asn861. 3 residues coordinate Mn(2+): Gln843, Glu859, and Asn861. Residues 956–1097 are allosteric domain; sequence SFCVPLPPSG…EMRQSDGPET (142 aa). Positions 957 to 1113 constitute an MGS-like domain; it reads FCVPLPPSGI…WREYLGFKPT (157 aa).

The protein belongs to the CarB family. As to quaternary structure, heterodimer composed of 2 chains; the small (or glutamine) chain promotes the hydrolysis of glutamine to ammonia, which is used by the large (or ammonia) chain to synthesize carbamoyl phosphate. Requires Mg(2+) as cofactor. The cofactor is Mn(2+).

Its subcellular location is the cytoplasm. The enzyme catalyses hydrogencarbonate + L-glutamine + 2 ATP + H2O = carbamoyl phosphate + L-glutamate + 2 ADP + phosphate + 2 H(+). The catalysed reaction is hydrogencarbonate + NH4(+) + 2 ATP = carbamoyl phosphate + 2 ADP + phosphate + 2 H(+). The protein operates within amino-acid biosynthesis; L-arginine biosynthesis; carbamoyl phosphate from bicarbonate: step 1/1. In terms of biological role, large subunit of the arginine-specific carbamoyl phosphate synthase (CPSase). CPSase catalyzes the formation of carbamoyl phosphate from the ammonia moiety of glutamine, hydrogencarbonate, and phosphate donated by ATP, constituting the first step of 2 biosynthetic pathways, one leading to arginine and/or urea and the other to pyrimidine nucleotides. The large subunit (synthetase) binds the substrates ammonia (free or transferred from glutamine from the small subunit), hydrogencarbonate and ATP and carries out an ATP-coupled ligase reaction, activating hydrogencarbonate by forming carboxy phosphate which reacts with ammonia to form carbamoyl phosphate. The protein is Carbamoyl phosphate synthase arginine-specific large chain (CPA2) of Eremothecium gossypii (strain ATCC 10895 / CBS 109.51 / FGSC 9923 / NRRL Y-1056) (Yeast).